The sequence spans 386 residues: Ribosomal RNA small subunit methyltransferase H (386 aa).

S-adenosyl-L-methionine-binding positions include 97-99 (GGH), D116, Y143, D167, and Q174.

It belongs to the methyltransferase superfamily. RsmH family.

It is found in the cytoplasm. The catalysed reaction is cytidine(1402) in 16S rRNA + S-adenosyl-L-methionine = N(4)-methylcytidine(1402) in 16S rRNA + S-adenosyl-L-homocysteine + H(+). Its function is as follows. Specifically methylates the N4 position of cytidine in position 1402 (C1402) of 16S rRNA. The protein is Ribosomal RNA small subunit methyltransferase H of Mycolicibacterium paratuberculosis (strain ATCC BAA-968 / K-10) (Mycobacterium paratuberculosis).